Consider the following 370-residue polypeptide: Dual-specificity RNA methyltransferase RlmN (370 aa).

Glutamate 93 functions as the Proton acceptor in the catalytic mechanism. In terms of domain architecture, Radical SAM core spans 99 to 331 (DRKRGTLCVS…TRVRRTRGDD (233 aa)). A disulfide bridge links cysteine 106 with cysteine 336. Positions 113, 117, and 120 each coordinate [4Fe-4S] cluster. S-adenosyl-L-methionine contacts are provided by residues 162-163 (GE), serine 194, 216-218 (SLH), and asparagine 293. The active-site S-methylcysteine intermediate is the cysteine 336.

This sequence belongs to the radical SAM superfamily. RlmN family. Requires [4Fe-4S] cluster as cofactor.

It is found in the cytoplasm. The catalysed reaction is adenosine(2503) in 23S rRNA + 2 reduced [2Fe-2S]-[ferredoxin] + 2 S-adenosyl-L-methionine = 2-methyladenosine(2503) in 23S rRNA + 5'-deoxyadenosine + L-methionine + 2 oxidized [2Fe-2S]-[ferredoxin] + S-adenosyl-L-homocysteine. It carries out the reaction adenosine(37) in tRNA + 2 reduced [2Fe-2S]-[ferredoxin] + 2 S-adenosyl-L-methionine = 2-methyladenosine(37) in tRNA + 5'-deoxyadenosine + L-methionine + 2 oxidized [2Fe-2S]-[ferredoxin] + S-adenosyl-L-homocysteine. In terms of biological role, specifically methylates position 2 of adenine 2503 in 23S rRNA and position 2 of adenine 37 in tRNAs. m2A2503 modification seems to play a crucial role in the proofreading step occurring at the peptidyl transferase center and thus would serve to optimize ribosomal fidelity. This is Dual-specificity RNA methyltransferase RlmN from Coxiella burnetii (strain RSA 493 / Nine Mile phase I).